Reading from the N-terminus, the 270-residue chain is Formamidopyrimidine-DNA glycosylase (270 aa).

Proline 2 functions as the Schiff-base intermediate with DNA in the catalytic mechanism. Catalysis depends on glutamate 3, which acts as the Proton donor. Lysine 57 serves as the catalytic Proton donor; for beta-elimination activity. DNA is bound by residues histidine 90, arginine 109, and lysine 150. Residues 235–269 (QIYGKKGCPCPKCGQKIESFTVGQRNSYVCLHCQK) form an FPG-type zinc finger. Arginine 259 acts as the Proton donor; for delta-elimination activity in catalysis.

The protein belongs to the FPG family. In terms of assembly, monomer. The cofactor is Zn(2+).

The enzyme catalyses Hydrolysis of DNA containing ring-opened 7-methylguanine residues, releasing 2,6-diamino-4-hydroxy-5-(N-methyl)formamidopyrimidine.. The catalysed reaction is 2'-deoxyribonucleotide-(2'-deoxyribose 5'-phosphate)-2'-deoxyribonucleotide-DNA = a 3'-end 2'-deoxyribonucleotide-(2,3-dehydro-2,3-deoxyribose 5'-phosphate)-DNA + a 5'-end 5'-phospho-2'-deoxyribonucleoside-DNA + H(+). Its function is as follows. Involved in base excision repair of DNA damaged by oxidation or by mutagenic agents. Acts as a DNA glycosylase that recognizes and removes damaged bases. Has a preference for oxidized purines, such as 7,8-dihydro-8-oxoguanine (8-oxoG). Has AP (apurinic/apyrimidinic) lyase activity and introduces nicks in the DNA strand. Cleaves the DNA backbone by beta-delta elimination to generate a single-strand break at the site of the removed base with both 3'- and 5'-phosphates. The sequence is that of Formamidopyrimidine-DNA glycosylase from Actinobacillus succinogenes (strain ATCC 55618 / DSM 22257 / CCUG 43843 / 130Z).